The sequence spans 247 residues: Adenosine 5'-phosphosulfate reductase (247 aa).

Residues Cys-133, Cys-134, Cys-216, and Cys-219 each contribute to the [4Fe-4S] cluster site. The interval 222–247 (KPAPGSDPRSGRWAGASKTECGLHAS) is disordered. The Nucleophile; cysteine thiosulfonate intermediate role is filled by Cys-242.

Belongs to the PAPS reductase family. CysH subfamily. [4Fe-4S] cluster is required as a cofactor.

The protein localises to the cytoplasm. It catalyses the reaction [thioredoxin]-disulfide + sulfite + AMP + 2 H(+) = adenosine 5'-phosphosulfate + [thioredoxin]-dithiol. It functions in the pathway sulfur metabolism; hydrogen sulfide biosynthesis; sulfite from sulfate. Functionally, catalyzes the formation of sulfite from adenosine 5'-phosphosulfate (APS) using thioredoxin as an electron donor. This is Adenosine 5'-phosphosulfate reductase from Rhodococcus erythropolis (strain PR4 / NBRC 100887).